The following is a 224-amino-acid chain: UPF0758 protein Rpic_2712 (224 aa).

Residues 102 to 224 enclose the MPN domain; that stretch reads TFESAQSVKD…VYGFLEHGKM (123 aa). Residues His173, His175, and Asp186 each coordinate Zn(2+). A JAMM motif motif is present at residues 173–186; it reads HNHPTGNTEPSESD.

Belongs to the UPF0758 family.

The sequence is that of UPF0758 protein Rpic_2712 from Ralstonia pickettii (strain 12J).